The chain runs to 422 residues: Tyrosine--tRNA ligase 1 (422 aa).

Tyr-36 lines the L-tyrosine pocket. Positions 41-50 (PTAGSLHIGH) match the 'HIGH' region motif. Residues Tyr-173 and Gln-177 each coordinate L-tyrosine. The 'KMSKS' region motif lies at 233–237 (KFGKT). Lys-236 contributes to the ATP binding site. The S4 RNA-binding domain maps to 355-419 (SDVVTLLLET…GKKQFAMVKL (65 aa)).

It belongs to the class-I aminoacyl-tRNA synthetase family. TyrS type 1 subfamily. Homodimer.

The protein localises to the cytoplasm. It catalyses the reaction tRNA(Tyr) + L-tyrosine + ATP = L-tyrosyl-tRNA(Tyr) + AMP + diphosphate + H(+). Catalyzes the attachment of tyrosine to tRNA(Tyr) in a two-step reaction: tyrosine is first activated by ATP to form Tyr-AMP and then transferred to the acceptor end of tRNA(Tyr). In Vibrio vulnificus (strain CMCP6), this protein is Tyrosine--tRNA ligase 1.